Here is a 364-residue protein sequence, read N- to C-terminus: Peptide chain release factor 1 (364 aa).

Residue Gln-232 is modified to N5-methylglutamine.

Belongs to the prokaryotic/mitochondrial release factor family. Post-translationally, methylated by PrmC. Methylation increases the termination efficiency of RF1.

It is found in the cytoplasm. Functionally, peptide chain release factor 1 directs the termination of translation in response to the peptide chain termination codons UAG and UAA. This is Peptide chain release factor 1 from Sorangium cellulosum (strain So ce56) (Polyangium cellulosum (strain So ce56)).